The primary structure comprises 1034 residues: FACT complex subunit spt-16 (1034 aa).

Basic and acidic residues-rich tracts occupy residues 433-448 (EEQE…DQKK), 463-481 (TRNK…KELG), and 493-503 (SKQDGGTDEKK). The segment at 433-511 (EEQENRETER…KKVKKSNVSY (79 aa)) is disordered. A coiled-coil region spans residues 617–642 (LSTAFRQIKEMQKRFRTEEAEEREKD). Composition is skewed to acidic residues over residues 926–950 (AESE…EADA) and 959–983 (SDED…DSDE). The interval 926 to 1034 (AESEGEDAGD…KAGPSHKRRK (109 aa)) is disordered. A compositionally biased stretch (basic and acidic residues) spans 984–1020 (SEGKDWSDLEEEAAKADKRREVEDGGRDRDRDRDRKR). The segment covering 1021–1034 (PSSSKAGPSHKRRK) has biased composition (basic residues).

The protein belongs to the peptidase M24 family. SPT16 subfamily. In terms of assembly, component of the FACT complex, a stable heterodimer of spt-16 and hmg-3 or hmg-4.

Its subcellular location is the nucleus. The protein localises to the chromosome. Component of the FACT complex, a general chromatin factor that acts to reorganize nucleosomes. The FACT complex is involved in multiple processes that require DNA as a template such as mRNA elongation, DNA replication and DNA repair. During transcription elongation the FACT complex acts as a histone chaperone that both destabilizes and restores nucleosomal structure. It facilitates the passage of RNA polymerase II and transcription by promoting the dissociation of one histone H2A-H2B dimer from the nucleosome, then subsequently promotes the reestablishment of the nucleosome following the passage of RNA polymerase II. The protein is FACT complex subunit spt-16 (spt-16) of Caenorhabditis briggsae.